Reading from the N-terminus, the 605-residue chain is Proline--tRNA ligase (605 aa).

Belongs to the class-II aminoacyl-tRNA synthetase family. ProS type 1 subfamily. In terms of assembly, homodimer.

The protein localises to the cytoplasm. It carries out the reaction tRNA(Pro) + L-proline + ATP = L-prolyl-tRNA(Pro) + AMP + diphosphate. Functionally, catalyzes the attachment of proline to tRNA(Pro) in a two-step reaction: proline is first activated by ATP to form Pro-AMP and then transferred to the acceptor end of tRNA(Pro). As ProRS can inadvertently accommodate and process non-cognate amino acids such as alanine and cysteine, to avoid such errors it has two additional distinct editing activities against alanine. One activity is designated as 'pretransfer' editing and involves the tRNA(Pro)-independent hydrolysis of activated Ala-AMP. The other activity is designated 'posttransfer' editing and involves deacylation of mischarged Ala-tRNA(Pro). The misacylated Cys-tRNA(Pro) is not edited by ProRS. The chain is Proline--tRNA ligase from Bifidobacterium adolescentis (strain ATCC 15703 / DSM 20083 / NCTC 11814 / E194a).